The chain runs to 429 residues: Adenylosuccinate synthetase (429 aa).

GTP-binding positions include 11 to 17 and 39 to 41; these read GDEGKGK and GHT. Aspartate 12 acts as the Proton acceptor in catalysis. Positions 12 and 39 each coordinate Mg(2+). IMP is bound by residues 12-15, 37-40, threonine 130, arginine 144, asparagine 226, threonine 241, and arginine 305; these read DEGK and NAGH. Histidine 40 (proton donor) is an active-site residue. 301–307 is a substrate binding site; it reads VTTGRRR. GTP-binding positions include arginine 307, 333–335, and 415–417; these read KLD and GVG.

It belongs to the adenylosuccinate synthetase family. Homodimer. Mg(2+) is required as a cofactor.

It localises to the cytoplasm. It carries out the reaction IMP + L-aspartate + GTP = N(6)-(1,2-dicarboxyethyl)-AMP + GDP + phosphate + 2 H(+). Its pathway is purine metabolism; AMP biosynthesis via de novo pathway; AMP from IMP: step 1/2. Plays an important role in the de novo pathway and in the salvage pathway of purine nucleotide biosynthesis. Catalyzes the first committed step in the biosynthesis of AMP from IMP. The polypeptide is Adenylosuccinate synthetase (Yarrowia lipolytica (strain CLIB 122 / E 150) (Yeast)).